A 677-amino-acid polypeptide reads, in one-letter code: Methionine--tRNA ligase (677 aa).

A 'HIGH' region motif is present at residues 14-24 (PYANGSIHLGH). Residues C145, C148, C158, and C161 each contribute to the Zn(2+) site. The 'KMSKS' region signature appears at 331–335 (KMSKS). ATP is bound at residue K334. In terms of domain architecture, tRNA-binding spans 575–677 (AFAAVDLRIA…SGAKPGQRVK (103 aa)).

This sequence belongs to the class-I aminoacyl-tRNA synthetase family. MetG type 1 subfamily. As to quaternary structure, homodimer. Zn(2+) serves as cofactor.

The protein localises to the cytoplasm. The enzyme catalyses tRNA(Met) + L-methionine + ATP = L-methionyl-tRNA(Met) + AMP + diphosphate. Functionally, is required not only for elongation of protein synthesis but also for the initiation of all mRNA translation through initiator tRNA(fMet) aminoacylation. This chain is Methionine--tRNA ligase, found in Pseudomonas aeruginosa (strain LESB58).